Consider the following 303-residue polypeptide: Probable 5-dehydro-4-deoxyglucarate dehydratase (303 aa).

This sequence belongs to the DapA family.

The enzyme catalyses 5-dehydro-4-deoxy-D-glucarate + H(+) = 2,5-dioxopentanoate + CO2 + H2O. Its pathway is carbohydrate acid metabolism; D-glucarate degradation; 2,5-dioxopentanoate from D-glucarate: step 2/2. This Acinetobacter baumannii (strain AB307-0294) protein is Probable 5-dehydro-4-deoxyglucarate dehydratase.